A 520-amino-acid polypeptide reads, in one-letter code: MAQISSMAQGIQTLSLNSSNLSKTQKGPLVSNSLFFGSKKLTQISAKSLGVFKKDSVLRVVRKSSFRISASVATAEKPHEIVLXPIKDISGTVKLPGSKSLSNRILLLAALSEGRTVVDNLLSSDDIHYMLGALKTLGLHVEDDNENQRAIVEGCGGQFPVGKKSEEEIQLFLGNAGTAMRPLTAAVTVAGGHSRYVLDGVPRMRERPIGDLVDGLKQLGAEVDCSLGTNCPPVRIVSKGGLPGGKVKLSGSISSQYLTALLMAAPLALGDVEIEIIDKLISVPYVEMTLKLMERFGVFVEHSSGWDRFLVKGGQKYKSPGKAFVEGDASSASYFLAGAAVTGGTVTVEGCGTSSLQGDVKFAEVLEKMGAEVTWTENSVTVKGPPRNSSGMKHLRAIDVNMNKMPDVAMTLAVVALFADGPTTIRDVASWRVKETERMIAICTELRKLGATVVEGSDYCIITPPEKLNVTEIDTYDDHRMAMAFSLAACADVPVTIKNPGCTRKTFPDYFEVLQKYSKH.

A chloroplast-targeting transit peptide spans 1–76; that stretch reads MAQISSMAQG…RISASVATAE (76 aa). 3 residues coordinate 3-phosphoshikimate: K99, S100, and R104. K99 provides a ligand contact to phosphoenolpyruvate. Residues G177 and R207 each coordinate phosphoenolpyruvate. Residues S254, S255, Q256, S282, D407, and K434 each contribute to the 3-phosphoshikimate site. A phosphoenolpyruvate-binding site is contributed by Q256. Residue D407 is the Proton acceptor of the active site. Residues R438, R480, and K505 each coordinate phosphoenolpyruvate.

The protein belongs to the EPSP synthase family.

It is found in the plastid. The protein resides in the chloroplast. The catalysed reaction is 3-phosphoshikimate + phosphoenolpyruvate = 5-O-(1-carboxyvinyl)-3-phosphoshikimate + phosphate. It functions in the pathway metabolic intermediate biosynthesis; chorismate biosynthesis; chorismate from D-erythrose 4-phosphate and phosphoenolpyruvate: step 6/7. In terms of biological role, catalyzes the transfer of the enolpyruvyl moiety of phosphoenolpyruvate (PEP) to the 5-hydroxyl of shikimate-3-phosphate (S3P) to produce enolpyruvyl shikimate-3-phosphate and inorganic phosphate. In Solanum lycopersicum (Tomato), this protein is 3-phosphoshikimate 1-carboxyvinyltransferase, chloroplastic.